We begin with the raw amino-acid sequence, 106 residues long: Colipase A (106 aa).

The first 11 residues, 1-11 (LLLVALAVAYA), serve as a signal peptide directing secretion. Residues 12–16 (VPDPR) constitute a propeptide, enterostatin, activation peptide. Intrachain disulfides connect Cys28-Cys39, Cys34-Cys50, Cys38-Cys72, Cys60-Cys80, and Cys74-Cys98. Residue Trp63 participates in taurodeoxycholate binding.

The protein belongs to the colipase family. Forms a 1:1 stoichiometric complex with pancreatic lipase. Expressed by the pancreas.

Its subcellular location is the secreted. Its function is as follows. Colipase is a cofactor of pancreatic lipase. It allows the lipase to anchor itself to the lipid-water interface. Without colipase the enzyme is washed off by bile salts, which have an inhibitory effect on the lipase. Functionally, enterostatin has a biological activity as a satiety signal. This chain is Colipase A (CLPS1), found in Equus caballus (Horse).